Reading from the N-terminus, the 342-residue chain is Dihydroorotase (342 aa).

The Zn(2+) site is built by His13 and His15. Substrate is bound by residues 15–17 (HLR) and Asn41. Zn(2+) is bound by residues Lys98, His135, and His173. At Lys98 the chain carries N6-carboxylysine. His135 serves as a coordination point for substrate. Substrate is bound at residue Leu218. Residue Asp246 participates in Zn(2+) binding. Asp246 is an active-site residue. Positions 250 and 262 each coordinate substrate.

The protein belongs to the metallo-dependent hydrolases superfamily. DHOase family. Class II DHOase subfamily. In terms of assembly, homodimer. It depends on Zn(2+) as a cofactor.

The enzyme catalyses (S)-dihydroorotate + H2O = N-carbamoyl-L-aspartate + H(+). It participates in pyrimidine metabolism; UMP biosynthesis via de novo pathway; (S)-dihydroorotate from bicarbonate: step 3/3. In terms of biological role, catalyzes the reversible cyclization of carbamoyl aspartate to dihydroorotate. The chain is Dihydroorotase from Vibrio atlanticus (strain LGP32) (Vibrio splendidus (strain Mel32)).